The sequence spans 942 residues: ATP-dependent RNA helicase DDX42 (942 aa).

Gly residues predominate over residues 1 to 18 (MNWNKGGPGTKRGFGFGG). Positions 1 to 114 (MNWNKGGPGT…KPIDSDSDDD (114 aa)) are disordered. The residue at position 5 (lysine 5) is an N6-acetyllysine. Arginine 12 carries the post-translational modification Omega-N-methylarginine. The segment covering 35–52 (SHSAFGATSSSSGFGKSA) has biased composition (low complexity). Phosphoserine is present on serine 58. A compositionally biased stretch (acidic residues) spans 70 to 84 (DEENAYFEDEEEDSS). Serine 96, serine 104, serine 109, and serine 111 each carry phosphoserine. Residues 116–157 (LEAFMAEVEDQAARDMKRLEEKDKERKNVKGIRDDIEEEDDQ) adopt a coiled-coil conformation. The interval 182 to 203 (EYDSDGNPIAPTKKIIDPLPPI) is disordered. A Phosphoserine modification is found at serine 185. The Q motif signature appears at 253–281 (SSFAHFGFDEQLMHQIRKSEYTQPTPIQC). One can recognise a Helicase ATP-binding domain in the interval 284-459 (VPVALSGRDM…RDILIDPIRV (176 aa)). Position 297-304 (297-304 (AKTGSGKT)) interacts with ATP. A DEAD box motif is present at residues 407-410 (DEAD). A Helicase C-terminal domain is found at 487–632 (WLTRRLVEFT…HVSKELLDLA (146 aa)). 2 stretches are compositionally biased toward polar residues: residues 737–760 (LNSV…TSAT) and 786–798 (GVNN…NSRE). Disordered regions lie at residues 737-762 (LNSV…ATKG) and 783-942 (GAQG…RWDS). The necessary for interaction with TP53BP2 stretch occupies residues 738 to 833 (NSVPTNSAQQ…TGNRHSDSPR (96 aa)). Serine 754 is subject to Phosphoserine. Residues 820–924 (SHGETGNRHS…KVDSKTDKTA (105 aa)) are compositionally biased toward basic and acidic residues. Residue lysine 899 forms a Glycyl lysine isopeptide (Lys-Gly) (interchain with G-Cter in SUMO2) linkage.

It belongs to the DEAD box helicase family. DDX42 subfamily. Transient component of the SF3B subcomplex of the 17S U2 SnRNP complex. Interacts (via the C-terminus) with TP53BP2; the interaction is not inhibitied by TP53BP2 ubiquitination and is independent of p53/TP53.

The protein resides in the cytoplasm. It localises to the nucleus. The catalysed reaction is ATP + H2O = ADP + phosphate + H(+). Functionally, ATP-dependent RNA helicase that binds to partially double-stranded RNAs (dsRNAs) in order to unwind RNA secondary structures. Unwinding is promoted in the presence of single-strand binding proteins. Also mediates RNA duplex formation thereby displacing the single-strand RNA binding protein. ATP and ADP modulate its activity: ATP binding and hydrolysis by DDX42 triggers RNA strand separation, whereas the ADP-bound form of the protein triggers annealing of complementary RNA strands. Required for assembly of the 17S U2 SnRNP complex of the spliceosome, a large ribonucleoprotein complex that removes introns from transcribed pre-mRNAs: DDX42 associates transiently with the SF3B subcomplex of the 17S U2 SnRNP complex and is released after fulfilling its role in the assembly of 17S U2 SnRNP. Involved in the survival of cells by interacting with TP53BP2 and thereby counteracting the apoptosis-stimulating activity of TP53BP2. Relocalizes TP53BP2 to the cytoplasm. In Pongo abelii (Sumatran orangutan), this protein is ATP-dependent RNA helicase DDX42 (DDX42).